The sequence spans 312 residues: Olfactory receptor 10P22 (312 aa).

Over 1-26 the chain is Extracellular; that stretch reads MGDDNDTDITEFILLGFSGYGFLQGH. Asn5 is a glycosylation site (N-linked (GlcNAc...) asparagine). Residues 27–47 form a helical membrane-spanning segment; that stretch reads LFWGVLCIYVVTLLGNSLIVL. Topologically, residues 48 to 57 are cytoplasmic; that stretch reads LTLADSALHS. The chain crosses the membrane as a helical span at residues 58–78; sequence PMYFFLRHFSVVEILYTTTIV. The Extracellular segment spans residues 79 to 89; sequence PRMLADLRSSC. A helical transmembrane segment spans residues 90–110; that stretch reads PTIPLASCFTQLYFFALFGIA. The Cytoplasmic segment spans residues 111-143; that stretch reads ECCLLTAMAYDRYAAICCPLHYTTLMSQGTYTG. Residues 144–164 traverse the membrane as a helical segment; that stretch reads LVGASYLAGVISGTTHSIFIF. The Extracellular portion of the chain corresponds to 165–205; sequence TLPFRGAKTIHHFLCDILPVLRLATASTFWGEVGNLFVTIT. A helical transmembrane segment spans residues 206-226; the sequence is FIFVPFLLIVASYACILVTIL. Residues 227–236 are Cytoplasmic-facing; it reads GVATSQGRQK. The chain crosses the membrane as a helical span at residues 237–257; it reads LFSTCSSHLFVVILFFGTATV. The Extracellular portion of the chain corresponds to 258-271; the sequence is AYMRPQADSFGNTD. A helical transmembrane segment spans residues 272–292; the sequence is QILTLVYTVVTPMCNPFVYSL. The Cytoplasmic segment spans residues 293-312; it reads RNKEVTGAMRRLMKRYLWGP.

This sequence belongs to the G-protein coupled receptor 1 family.

It localises to the cell membrane. Functionally, odorant receptor. The chain is Olfactory receptor 10P22 from Mus musculus (Mouse).